Here is a 338-residue protein sequence, read N- to C-terminus: MRRLNRKNSDASKKLNDRQRKVLYCIVREYIENKKPVSSQRVLEVSNIEFSSATIRNDMKKLEYLGYIYQPHTSAGRIPTDKGLRFYYEEMLKISKETSEADLAVETFKSMPLADPEKVLFLAGNLLARLTEGYVLIERPNTRDLKILRVMLIPVSEDYLIFSILTEFGVSRVTPIKTQERLNWEEIERQLNFLLRGKTIGEVLLGRIESLKGSGFLRLIESLIGETIERYLDAGLENLLKDETLALEDIRNLLEEIKDQKFLESLVGEGISVMIGREIGRKNLEKFAVFSGRYFKGESPIGSVYFFTSKVTRYDRNHKIFEYILNRLSEYFTSTSRR.

Belongs to the HrcA family.

Functionally, negative regulator of class I heat shock genes (grpE-dnaK-dnaJ and groELS operons). Prevents heat-shock induction of these operons. In Thermotoga petrophila (strain ATCC BAA-488 / DSM 13995 / JCM 10881 / RKU-1), this protein is Heat-inducible transcription repressor HrcA.